A 315-amino-acid polypeptide reads, in one-letter code: Olfactory receptor 10H5 (315 aa).

Topologically, residues 1-25 (MQGLNHTSVSEFILVGFSAFPHLQL) are extracellular. N-linked (GlcNAc...) asparagine glycosylation is present at Asn-5. A helical transmembrane segment spans residues 26–46 (MLFLLFLLMYLFTLLGNLLIM). Over 47-54 (ATVWSERS) the chain is Cytoplasmic. The chain crosses the membrane as a helical span at residues 55 to 75 (LHMPMYLFLCALSITEILYTV). At 76–99 (AIIPRMLADLLSTQRSIAFLACAS) the chain is on the extracellular side. A disulfide bond links Cys-97 and Cys-189. A helical membrane pass occupies residues 100-120 (QMFFSFSFGFTHSFLLTVMGY). Over 121–139 (DRYVAICHPLRYNVLMSLR) the chain is Cytoplasmic. The chain crosses the membrane as a helical span at residues 140–160 (GCTCRVGCSWAGGLVMGMVVT). At 161–197 (SAIFHLAFCGHKEIHHFFCHVPPLLKLACGDDVLVVA) the chain is on the extracellular side. The chain crosses the membrane as a helical span at residues 198-218 (KGVGLVCITALLGCFLLILLS). Over 219–238 (YAFIVAAILKIPSAEGRNKA) the chain is Cytoplasmic. A helical membrane pass occupies residues 239–259 (FSTCASHLTVVVVHYGFASVI). Topologically, residues 260 to 272 (YLKPKGPQSPEGD) are extracellular. The helical transmembrane segment at 273–293 (TLMGITYTVLTPFLSPIIFSL) threads the bilayer. Over 294–315 (RNKELKVAMKKTCFTKLFPQNC) the chain is Cytoplasmic.

It belongs to the G-protein coupled receptor 1 family.

The protein localises to the cell membrane. Odorant receptor. The protein is Olfactory receptor 10H5 (OR10H5) of Homo sapiens (Human).